Reading from the N-terminus, the 318-residue chain is Transaldolase (318 aa).

The Schiff-base intermediate with substrate role is filled by lysine 132.

The protein belongs to the transaldolase family. Type 1 subfamily. Homodimer.

Its subcellular location is the cytoplasm. The enzyme catalyses D-sedoheptulose 7-phosphate + D-glyceraldehyde 3-phosphate = D-erythrose 4-phosphate + beta-D-fructose 6-phosphate. Its pathway is carbohydrate degradation; pentose phosphate pathway; D-glyceraldehyde 3-phosphate and beta-D-fructose 6-phosphate from D-ribose 5-phosphate and D-xylulose 5-phosphate (non-oxidative stage): step 2/3. Its function is as follows. Transaldolase is important for the balance of metabolites in the pentose-phosphate pathway. The sequence is that of Transaldolase from Shewanella piezotolerans (strain WP3 / JCM 13877).